Here is a 141-residue protein sequence, read N- to C-terminus: Large ribosomal subunit protein uL11 (141 aa).

The protein belongs to the universal ribosomal protein uL11 family. In terms of assembly, part of the ribosomal stalk of the 50S ribosomal subunit. Interacts with L10 and the large rRNA to form the base of the stalk. L10 forms an elongated spine to which L12 dimers bind in a sequential fashion forming a multimeric L10(L12)X complex. Post-translationally, one or more lysine residues are methylated.

Functionally, forms part of the ribosomal stalk which helps the ribosome interact with GTP-bound translation factors. The protein is Large ribosomal subunit protein uL11 of Streptococcus pneumoniae serotype 2 (strain D39 / NCTC 7466).